A 429-amino-acid chain; its full sequence is Probable M18 family aminopeptidase 2 (429 aa).

Zn(2+) contacts are provided by His-82, His-156, and His-401.

It belongs to the peptidase M18 family. Requires Zn(2+) as cofactor.

This chain is Probable M18 family aminopeptidase 2, found in Pseudomonas fluorescens (strain Pf0-1).